The following is a 196-amino-acid chain: MSWPYATPGIPDEEFIRAEGVPMTKAEIRALALSKLRLIKGGTLVDVGCGTGTISVEAALIMGEGSKVYAIDKDPLAVEITKKNAAKFGVGDRLIVAEGDALELLPKLPRSNRYFLGGGGRELPMLFQTALELAGTGGVIVADVITLESLRLALDFLENAGVKYEIAQVYIARGRRLGGYTILSPLNPVYIITAYA.

Residues threonine 24, 48–52, aspartate 72, and alanine 101 contribute to the S-adenosyl-L-methionine site; that span reads GCGTG.

It belongs to the methyltransferase superfamily. Archaeal-type CbiT family.

It catalyses the reaction Co-precorrin-6B + S-adenosyl-L-methionine = Co-precorrin-7 + S-adenosyl-L-homocysteine + CO2. The protein operates within cofactor biosynthesis; adenosylcobalamin biosynthesis; cob(II)yrinate a,c-diamide from sirohydrochlorin (anaerobic route): step 8/10. Functionally, catalyzes the methylation of C-15 in cobalt-precorrin-6B followed by the decarboxylation of C-12 to form cobalt-precorrin-7. This is Probable cobalt-precorrin-6B C(15)-methyltransferase (decarboxylating) from Pyrobaculum aerophilum (strain ATCC 51768 / DSM 7523 / JCM 9630 / CIP 104966 / NBRC 100827 / IM2).